The sequence spans 208 residues: Ribosomal RNA large subunit methyltransferase E (208 aa).

S-adenosyl-L-methionine is bound by residues Gly62, Trp64, Asp82, Asp98, and Asp123. Lys163 acts as the Proton acceptor in catalysis.

This sequence belongs to the class I-like SAM-binding methyltransferase superfamily. RNA methyltransferase RlmE family.

The protein resides in the cytoplasm. The catalysed reaction is uridine(2552) in 23S rRNA + S-adenosyl-L-methionine = 2'-O-methyluridine(2552) in 23S rRNA + S-adenosyl-L-homocysteine + H(+). In terms of biological role, specifically methylates the uridine in position 2552 of 23S rRNA at the 2'-O position of the ribose in the fully assembled 50S ribosomal subunit. This Edwardsiella ictaluri (strain 93-146) protein is Ribosomal RNA large subunit methyltransferase E.